The chain runs to 69 residues: uncharacterized protein (69 aa).

An N-terminal signal peptide occupies residues 1–16; it reads MKKIMLFLAMTSILSA. Cysteine 17 carries N-palmitoyl cysteine lipidation. A lipid anchor (S-diacylglycerol cysteine) is attached at cysteine 17.

It localises to the cell membrane. This is an uncharacterized protein from Bacillus subtilis (strain 168).